The chain runs to 209 residues: High mobility group protein B2 (209 aa).

An N6-acetyllysine modification is found at K3. The segment at residues 9-79 (PRGKMSSYAF…RYDREMKNYV (71 aa)) is a DNA-binding region (HMG box 1). Cysteine sulfonic acid (-SO3H); alternate is present on C23. The cysteines at positions 23 and 45 are disulfide-linked. K30 carries the N6-acetyllysine modification. Position 35 is a phosphoserine (S35). An N6-acetyllysine modification is found at K43. Residue C45 is modified to Cysteine sulfonic acid (-SO3H); alternate. The segment covering 52 to 76 (MSAKEKSKFEDMAKSDKARYDREMK) has biased composition (basic and acidic residues). 2 disordered regions span residues 52-150 (MSAK…KAAK) and 162-209 (YRAK…EDEE). N6-acetyllysine is present on K90. The segment at residues 95–163 (PKRPPSAFFL…KYEKDIAAYR (69 aa)) is a DNA-binding region (HMG box 2). S100 is subject to Phosphoserine. Position 106 is a cysteine sulfonic acid (-SO3H) (C106). 3 stretches are compositionally biased toward basic and acidic residues: residues 107–117 (SEHRPKIKSEH), 137–150 (SAKD…KAAK), and 162–172 (YRAKGKSEAGK). N6-acetyllysine is present on residues K114 and K141. A required for chemotactic activity region spans residues 165–180 (KGKSEAGKKGPGRPTG). The segment covering 187–209 (PEDEEEEEEEEDEDEEEEDEDEE) has biased composition (acidic residues).

This sequence belongs to the HMGB family. Interacts with POU2F2, POU2F1 and POU3F1. Component of the RAG complex composed of core components RAG1 and RAG2, and associated component HMGB1 or HMGB2. Component of the SET complex, composed of at least ANP32A, APEX1, HMGB2, NME1, SET and TREX1. Directly interacts with SET. Interacts with LEF1. Reduction/oxidation of cysteine residues Cys-23, Cys-45 and Cys-106 and a possible intramolecular disulfide bond involving Cys-23 and Cys-45 give rise to different redox forms with specific functional activities in various cellular compartments: 1- fully reduced HMGB2 (HMGB2C23hC45hC106h), 2- disulfide HMGB2 (HMGB2C23-C45C106h) and 3- sulfonyl HMGB2 (HMGB2C23soC45soC106so).

It is found in the nucleus. The protein localises to the chromosome. It localises to the cytoplasm. The protein resides in the secreted. Multifunctional protein with various roles in different cellular compartments. May act in a redox sensitive manner. In the nucleus is an abundant chromatin-associated non-histone protein involved in transcription, chromatin remodeling and V(D)J recombination and probably other processes. Binds DNA with a preference to non-canonical DNA structures such as single-stranded DNA. Can bent DNA and enhance DNA flexibility by looping thus providing a mechanism to promote activities on various gene promoters by enhancing transcription factor binding and/or bringing distant regulatory sequences into close proximity. Involved in V(D)J recombination by acting as a cofactor of the RAG complex: acts by stimulating cleavage and RAG protein binding at the 23 bp spacer of conserved recombination signal sequences (RSS). Proposed to be involved in the innate immune response to nucleic acids by acting as a cytoplasmic promiscuous immunogenic DNA/RNA sensor which cooperates with subsequent discriminative sensing by specific pattern recognition receptors. In the extracellular compartment acts as a chemokine. Promotes proliferation and migration of endothelial cells implicating AGER/RAGE. Has antimicrobial activity in gastrointestinal epithelial tissues. Involved in inflammatory response to antigenic stimulus coupled with pro-inflammatory activity. May play a role in germ cell differentiation. Involved in modulation of neurogenesis probably by regulation of neural stem proliferation. Involved in articular cartilage surface maintenance implicating LEF1 and the Wnt/beta-catenin pathway. The chain is High mobility group protein B2 (HMGB2) from Bos taurus (Bovine).